A 272-amino-acid chain; its full sequence is Tryptophan synthase alpha chain (272 aa).

Residues Glu49 and Asp60 each act as proton acceptor in the active site.

Belongs to the TrpA family. In terms of assembly, tetramer of two alpha and two beta chains.

It catalyses the reaction (1S,2R)-1-C-(indol-3-yl)glycerol 3-phosphate + L-serine = D-glyceraldehyde 3-phosphate + L-tryptophan + H2O. The protein operates within amino-acid biosynthesis; L-tryptophan biosynthesis; L-tryptophan from chorismate: step 5/5. In terms of biological role, the alpha subunit is responsible for the aldol cleavage of indoleglycerol phosphate to indole and glyceraldehyde 3-phosphate. This Acidithiobacillus ferrooxidans (strain ATCC 23270 / DSM 14882 / CIP 104768 / NCIMB 8455) (Ferrobacillus ferrooxidans (strain ATCC 23270)) protein is Tryptophan synthase alpha chain.